Here is a 156-residue protein sequence, read N- to C-terminus: Small ribosomal subunit protein uS7 (156 aa).

Belongs to the universal ribosomal protein uS7 family. In terms of assembly, part of the 30S ribosomal subunit. Contacts proteins S9 and S11.

Functionally, one of the primary rRNA binding proteins, it binds directly to 16S rRNA where it nucleates assembly of the head domain of the 30S subunit. Is located at the subunit interface close to the decoding center, probably blocks exit of the E-site tRNA. The chain is Small ribosomal subunit protein uS7 from Deinococcus geothermalis (strain DSM 11300 / CIP 105573 / AG-3a).